The sequence spans 156 residues: Small ribosomal subunit protein uS7 (156 aa).

Belongs to the universal ribosomal protein uS7 family. As to quaternary structure, part of the 30S ribosomal subunit. Contacts proteins S9 and S11.

One of the primary rRNA binding proteins, it binds directly to 16S rRNA where it nucleates assembly of the head domain of the 30S subunit. Is located at the subunit interface close to the decoding center, probably blocks exit of the E-site tRNA. This Rhodococcus erythropolis (strain PR4 / NBRC 100887) protein is Small ribosomal subunit protein uS7.